Here is a 23-residue protein sequence, read N- to C-terminus: Phallacidin proprotein (23 aa).

A propeptide is located at residue Pro-1. Positions 2 to 8 form a cross-link, cyclopeptide (Ala-Pro); that stretch reads AWLVDCP. The 2'-cysteinyl-6'-hydroxytryptophan sulfoxide (Trp-Cys) cross-link spans 3 to 7; that stretch reads WLVDC. Residues 9 to 23 constitute a propeptide that is removed on maturation; the sequence is CVGDDVNFILTRGQK.

This sequence belongs to the MSDIN fungal toxin family. Post-translationally, processed by the macrocyclase-peptidase enzyme POPB to yield a toxic cyclic heptapeptide. POPB first removes 10 residues from the N-terminus. Conformational trapping of the remaining peptide forces the enzyme to release this intermediate rather than proceed to macrocyclization. The enzyme rebinds the remaining peptide in a different conformation and catalyzes macrocyclization of the N-terminal 7 residues.

Functionally, major toxin that belongs to the bicyclic heptapeptides called phallotoxins. Although structurally related to amatoxins, phallotoxins have a different mode of action, which is the stabilization of F-actin. Phallotoxins are poisonous when administered parenterally, but not orally because of poor absorption. This chain is Phallacidin proprotein, found in Amanita fuligineoides.